Here is a 133-residue protein sequence, read N- to C-terminus: Peptide methionine sulfoxide reductase MsrB (133 aa).

In terms of domain architecture, MsrB spans 8–130 (LEEWRAMLDP…NSVCLDFKPR (123 aa)). Zn(2+)-binding residues include C47, C50, C96, and C99. The active-site Nucleophile is C119.

This sequence belongs to the MsrB Met sulfoxide reductase family. The cofactor is Zn(2+).

It catalyses the reaction L-methionyl-[protein] + [thioredoxin]-disulfide + H2O = L-methionyl-(R)-S-oxide-[protein] + [thioredoxin]-dithiol. This chain is Peptide methionine sulfoxide reductase MsrB, found in Pseudomonas putida (strain W619).